Reading from the N-terminus, the 200-residue chain is Late embryogenesis abundant protein 19 (200 aa).

Disordered regions lie at residues 1–158 (MASH…KSTV) and 172–200 (TEDK…ARDH). Composition is skewed to basic and acidic residues over residues 13 to 23 (GETKAHTEEKA), 30 to 42 (SKDK…DRAS), 53 to 81 (QDTK…KDKT), 88 to 97 (ARDKAAESKD), and 105 to 114 (EKTEQAKQKA). A coiled-coil region spans residues 52–81 (GQDTKEATKEKAQAAKERASETAQAAKDKT). Positions 115–130 (AETAGAAKQKTAETAQ) are enriched in low complexity. Residues 145–156 (SVLQQASEQVKS) show a composition bias toward polar residues. The segment covering 172–183 (TEDKAGTDDGAN) has biased composition (basic and acidic residues). Residues 186–200 (TSATAAATETTARDH) show a composition bias toward low complexity.

The protein belongs to the LEA type 4 family. In terms of tissue distribution, expressed in the shoot apex and leaves.

Functionally, involved in response to drought stress. The chain is Late embryogenesis abundant protein 19 from Oryza sativa subsp. indica (Rice).